The chain runs to 435 residues: Glutamate-1-semialdehyde 2,1-aminomutase (435 aa).

At Lys-266 the chain carries N6-(pyridoxal phosphate)lysine.

It belongs to the class-III pyridoxal-phosphate-dependent aminotransferase family. HemL subfamily. Homodimer. The cofactor is pyridoxal 5'-phosphate.

Its subcellular location is the cytoplasm. It carries out the reaction (S)-4-amino-5-oxopentanoate = 5-aminolevulinate. It functions in the pathway porphyrin-containing compound metabolism; protoporphyrin-IX biosynthesis; 5-aminolevulinate from L-glutamyl-tRNA(Glu): step 2/2. The protein is Glutamate-1-semialdehyde 2,1-aminomutase of Helicobacter hepaticus (strain ATCC 51449 / 3B1).